A 180-amino-acid chain; its full sequence is O-acetyl-ADP-ribose deacetylase (180 aa).

In terms of domain architecture, Macro spans 1–175; that stretch reads MSGRINVVQG…LYQRLLGQYD (175 aa). Substrate is bound by residues 11–12, Asn-25, 33–35, and 122–126; these read DI, GVD, and STGIY. Asp-35 serves as the catalytic Proton acceptor.

The protein belongs to the MacroD-type family. YmdB subfamily. Homodimer. Interacts with RNase III.

The enzyme catalyses 3''-O-acetyl-ADP-D-ribose + H2O = ADP-D-ribose + acetate + H(+). The catalysed reaction is 2''-O-acetyl-ADP-D-ribose + H2O = ADP-D-ribose + acetate + H(+). Deacetylates O-acetyl-ADP ribose to yield ADP-ribose and free acetate. Down-regulates ribonuclease 3 (RNase III) activity. Acts by interacting directly with the region of the ribonuclease that is required for dimerization/activation. This Cronobacter sakazakii (strain ATCC BAA-894) (Enterobacter sakazakii) protein is O-acetyl-ADP-ribose deacetylase.